A 51-amino-acid chain; its full sequence is DNA-binding protein (51 aa).

The segment at 1–51 (MVYRRRRSRSADGTYTRRRRSSGYRRRPGRPRTYRRSRSATRRSGYRRRRY) is disordered. Tandem repeats lie at residues 5–10 (RRRSRS) and 17–22 (RRRRSS). The tract at residues 5 to 22 (RRRSRSADGTYTRRRRSS) is 2 X 6 AA repeats of R-R-R-R-S-S. The segment covering 16 to 51 (TRRRRSSGYRRRPGRPRTYRRSRSATRRSGYRRRRY) has biased composition (basic residues).

Probably phosphorylated in infected cells.

The protein localises to the virion. Functionally, thought to be responsible for DNA condensation during packaging of the nucleocapsids. The protein is DNA-binding protein (P6.5) of Orgyia pseudotsugata (Douglas-fir tussock moth).